A 401-amino-acid polypeptide reads, in one-letter code: Glutamyl-tRNA reductase (401 aa).

Residues Thr-45–Arg-48, Ser-101, Glu-106–Gln-108, and Gln-112 each bind substrate. Cys-46 acts as the Nucleophile in catalysis. Gly-177 to Gly-182 contacts NADP(+).

Belongs to the glutamyl-tRNA reductase family. In terms of assembly, homodimer.

The enzyme catalyses (S)-4-amino-5-oxopentanoate + tRNA(Glu) + NADP(+) = L-glutamyl-tRNA(Glu) + NADPH + H(+). It functions in the pathway porphyrin-containing compound metabolism; protoporphyrin-IX biosynthesis; 5-aminolevulinate from L-glutamyl-tRNA(Glu): step 1/2. Catalyzes the NADPH-dependent reduction of glutamyl-tRNA(Glu) to glutamate 1-semialdehyde (GSA). The chain is Glutamyl-tRNA reductase from Clostridium botulinum (strain Eklund 17B / Type B).